Here is a 688-residue protein sequence, read N- to C-terminus: MWYLVLFSLLASFSAEPTMHGEILSPNYPQAYPNDVVKSWDIEVPEGFGIHLYFTHVDIEPSESCAYDSVQIISGGIEEGRLCGQRTSKSPNSPIIEEFQFPYNKLQVVFTSDFSIEEQFTGFAAYYTAIDVNECTDFTDVPCSHFCNNFIGGYFCSCPPEYFLHDDMRNCGVNCSGDVFTALIGEISSPNYPNPYPENSRCEYQIQLQEGFQVVVTMQREDFDVEPADSEGNCPDSLTFAAKNQQFGPYCGDGFPGPLTIRTQSNTLGIVFQTDLMGQKKGWKLRYHGDPISCPKESTANSNWEPDKAKYVFKDVVKITCVDGFEVVEGHVSSTSYYSTCQSDGQWSNSGLKCQPVYCGIPDPIANGKVEEPENSVFGTVIHYTCEEPYYYMEHEEGGEYRCAANGRWVNDQLGIELPRCIPVCGVPTEPFQVQQKIFGGQPAKIENFPWQVFFNHPTAGGALINEYWVLTAAHVVEKNSDPSMYAGITALRLADLENAQRLYTKRVIIHPGWKEDDDLNPRTNFDNDIALVQLKDPVKMGPKFSPICLPGTSSEYNLSPGDMGLISGWGRTEKRLHVINLRGAKVPVTSLETCKQVKEENPTARPEDYVITDNMICAGEKGVDSCKGDSGGAFAFQVPNVKAPKFYVAGLVSWGKKCGAYGVYTKVKNYVDWILKTMQENSGPRKD.

The signal sequence occupies residues Met-1–Ala-15. The CUB 1 domain maps to Glu-16 to Ile-130. Glu-60, Asp-68, Asp-113, Asp-131, Val-132, and Glu-134 together coordinate Ca(2+). An intrachain disulfide couples Cys-65 to Cys-83. Positions Asp-131–Gly-172 constitute an EGF-like; calcium-binding domain. 3 cysteine pairs are disulfide-bonded: Cys-135-Cys-147, Cys-143-Cys-156, and Cys-158-Cys-171. Ca(2+) is bound by residues Asn-149, Phe-150, and Gly-153. The residue at position 149 (Asn-149) is a (3R)-3-hydroxyasparagine. An N-linked (GlcNAc...) asparagine glycan is attached at Asn-174. A disulfide bond links Cys-175 and Cys-202. The CUB 2 domain occupies Cys-175–Asp-290. Ca(2+) is bound by residues Glu-226, Asp-236, Asp-275, Gly-278, and Gln-279. Cys-234 and Cys-251 are oxidised to a cystine. 2 consecutive Sushi domains span residues Ile-292–Pro-356 and Val-357–Pro-423. 7 disulfides stabilise this stretch: Cys-294–Cys-341, Cys-321–Cys-354, Cys-359–Cys-403, Cys-386–Cys-421, Cys-425–Cys-549, Cys-595–Cys-618, and Cys-627–Cys-659. The region spanning Ile-438–Gln-680 is the Peptidase S1 domain. Active-site charge relay system residues include His-475 and Asp-529. The active-site Charge relay system is the Ser-631.

This sequence belongs to the peptidase S1 family. In terms of assembly, core component of the complement C1 complex, a calcium-dependent complex composed of 1 molecule of the C1Q subcomplex, 2 molecules of C1R and 2 molecules of C1S. The C1Q subcomplex is composed 18 subunits: 3 chains of C1QA, C1QB, and C1QC trimerize to form 6 collagen-like triple helices connected to six globular ligand-recognition modules. Cleaved and activated by C1R to generate Complement C1s subcomponent heavy and light chains. Post-translationally, the iron and 2-oxoglutarate dependent 3-hydroxylation of aspartate and asparagine is (R) stereospecific within EGF domains. As to expression, specifically expressed in male reproductive tissues.

Its subcellular location is the secreted. The protein resides in the cell surface. The catalysed reaction is Cleavage of Arg-|-Ala bond in complement component C4 to form C4a and C4b, and Lys(or Arg)-|-Lys bond in complement component C2 to form C2a and C2b: the 'classical' pathway C3 convertase.. With respect to regulation, cleaved and activated by C1R. Immunoglobulin-binding promotes autoactivation of C1R, which results in the cleavage of the Arg-Ile bond in the catalytic domain. Inhibited by C1 inhibitor (SERPING1). Its function is as follows. Component of the complement C1 complex, a multiprotein complex that initiates the classical pathway of the complement system, a cascade of proteins that leads to phagocytosis and breakdown of pathogens and signaling that strengthens the adaptive immune system. C1S is activated following association of the C1 complex with immunoglobulins (IgG or IgM) complexed with antigens to form antigen-antibody complexes on the surface of pathogens. C1S is cleaved and activated by C1R to generate C1s subcomponent heavy and light chains. C1s subcomponent light chain then cleaves and activates C2 and C4, the next components of the classical complement pathway. In terms of biological role, serine protease component of the complement C1 complex, which catalyzes cleavage and activation of C2 and C4, the next components of the classical complement pathway. Also cleaves IGFBP5 and thereby inhibits the trophic effects of IGF1. This Mus musculus (Mouse) protein is Complement C1s-1 subcomponent.